We begin with the raw amino-acid sequence, 381 residues long: Lipid-A-disaccharide synthase (381 aa).

Belongs to the LpxB family.

It catalyses the reaction a lipid X + a UDP-2-N,3-O-bis[(3R)-3-hydroxyacyl]-alpha-D-glucosamine = a lipid A disaccharide + UDP + H(+). The protein operates within bacterial outer membrane biogenesis; LPS lipid A biosynthesis. In terms of biological role, condensation of UDP-2,3-diacylglucosamine and 2,3-diacylglucosamine-1-phosphate to form lipid A disaccharide, a precursor of lipid A, a phosphorylated glycolipid that anchors the lipopolysaccharide to the outer membrane of the cell. In Solibacter usitatus (strain Ellin6076), this protein is Lipid-A-disaccharide synthase.